The sequence spans 421 residues: MFTANMNIQDYDPILWQAIENENRRQEEHIELIASENYASPRVMQAQGSQFTNKYAEGYPGKRYYGGCEYADIVEQLAIDRAKQLFGADYVNVQPHSGSQANAAVYGALIQPNDTILGMDLAHGGHLTHGAKVSFSGKIYNSVLYGITAEGLIDYEDVRQKALECKPKMIVAGFSAYSQIVDWAKMREIADEVGAYLFVDMAHVAGLIAAGVYPSPLPYAHVVTTTTHKTLGGPRGGLILSACGDEEIYKKLQSSVFPANQGGPLVHIIAAKAVCFKEALEPEYKIYQQNVVKNAKAMVEVFKQRSYEVISNGTENHLFLVSFVKQGLTGKAADAALGQANITVNKNSVPNDPQKPFITSGIRIGTPAVTRRGFKEADVQALAGWMCDVLDSIGKDNHEQVIAETKAKVLDICARLPVYAK.

(6S)-5,6,7,8-tetrahydrofolate contacts are provided by residues L121 and 125–127 (GHL). K229 is subject to N6-(pyridoxal phosphate)lysine.

The protein belongs to the SHMT family. As to quaternary structure, homodimer. The cofactor is pyridoxal 5'-phosphate.

The protein resides in the cytoplasm. The catalysed reaction is (6R)-5,10-methylene-5,6,7,8-tetrahydrofolate + glycine + H2O = (6S)-5,6,7,8-tetrahydrofolate + L-serine. It participates in one-carbon metabolism; tetrahydrofolate interconversion. The protein operates within amino-acid biosynthesis; glycine biosynthesis; glycine from L-serine: step 1/1. Functionally, catalyzes the reversible interconversion of serine and glycine with tetrahydrofolate (THF) serving as the one-carbon carrier. This reaction serves as the major source of one-carbon groups required for the biosynthesis of purines, thymidylate, methionine, and other important biomolecules. Also exhibits THF-independent aldolase activity toward beta-hydroxyamino acids, producing glycine and aldehydes, via a retro-aldol mechanism. This chain is Serine hydroxymethyltransferase, found in Actinobacillus pleuropneumoniae serotype 5b (strain L20).